A 232-amino-acid chain; its full sequence is Fibrillarin-like rRNA/tRNA 2'-O-methyltransferase (232 aa).

S-adenosyl-L-methionine is bound by residues 89–90 (TT), 108–109 (EF), 133–134 (DA), and 153–156 (DIAQ).

It belongs to the methyltransferase superfamily. Fibrillarin family. As to quaternary structure, interacts with nop5. Component of box C/D small ribonucleoprotein (sRNP) particles that contain rpl7ae, FlpA and nop5, plus a guide RNA.

Its function is as follows. Involved in pre-rRNA and tRNA processing. Utilizes the methyl donor S-adenosyl-L-methionine to catalyze the site-specific 2'-hydroxyl methylation of ribose moieties in rRNA and tRNA. Site specificity is provided by a guide RNA that base pairs with the substrate. Methylation occurs at a characteristic distance from the sequence involved in base pairing with the guide RNA. The chain is Fibrillarin-like rRNA/tRNA 2'-O-methyltransferase from Methanopyrus kandleri (strain AV19 / DSM 6324 / JCM 9639 / NBRC 100938).